Here is a 630-residue protein sequence, read N- to C-terminus: Pentatricopeptide repeat-containing protein At1g26460, mitochondrial (630 aa).

The N-terminal 115 residues, 1-115 (MASHLFTRSR…RALSETLDMN (115 aa)), are a transit peptide targeting the mitochondrion. A disordered region spans residues 42–79 (LLATESTDHDPSNHQSTSTPLPPNPATGSPLYQENWRS). A compositionally biased stretch (polar residues) spans 67–77 (ATGSPLYQENW). PPR repeat units lie at residues 154 to 189 (DVNL…SVEP), 190 to 224 (NTAS…GKDS), 227 to 261 (DDES…GYML), 468 to 503 (SVAA…GLTP), 504 to 538 (NIDS…GVKP), and 539 to 573 (DSRT…GFEP).

It belongs to the PPR family. P subfamily.

It is found in the mitochondrion. In Arabidopsis thaliana (Mouse-ear cress), this protein is Pentatricopeptide repeat-containing protein At1g26460, mitochondrial.